The following is a 121-amino-acid chain: MKSLLLIFLGGGTGSVLRYLLTISIYRQGTTNFPWGTFAVNILGCILIGVFYTLTSRIHINNDIRLMLTIGLCGGFTTFSTFSNESLQLLKSGLYPSFFTYIIGSVVLGILGVMLGIWMSE.

4 consecutive transmembrane segments (helical) span residues 5–25 (LLIFLGGGTGSVLRYLLTISI), 33–53 (FPWGTFAVNILGCILIGVFYT), 66–83 (LMLTIGLCGGFTTFSTFS), and 98–118 (FFTYIIGSVVLGILGVMLGIW). The Na(+) site is built by Gly-74 and Thr-77.

The protein belongs to the fluoride channel Fluc/FEX (TC 1.A.43) family.

It is found in the cell inner membrane. The catalysed reaction is fluoride(in) = fluoride(out). Na(+) is not transported, but it plays an essential structural role and its presence is essential for fluoride channel function. Its function is as follows. Fluoride-specific ion channel. Important for reducing fluoride concentration in the cell, thus reducing its toxicity. This Phocaeicola vulgatus (strain ATCC 8482 / DSM 1447 / JCM 5826 / CCUG 4940 / NBRC 14291 / NCTC 11154) (Bacteroides vulgatus) protein is Fluoride-specific ion channel FluC.